A 1303-amino-acid chain; its full sequence is Serine/threonine-protein kinase ULK4 (1303 aa).

The region spanning 4-280 (FVLYEEIGRG…WEGVLQHPFW (277 aa)) is the Protein kinase domain. D121 acts as the Proton acceptor in catalysis. Disordered stretches follow at residues 304–332 (ECSGPHDSRELLQSPKNGQAKGQKAAHRL) and 369–401 (TSAMVELNPGEGEDPSSPQKTSPLSKMTSGHLS). Polar residues predominate over residues 384 to 400 (SSPQKTSPLSKMTSGHL). 7 HEAT repeats span residues 504 to 543 (RLLHSPLFQLLIQHLRIAPNWDIRSKVARVVGMLALHTTE), 727 to 765 (LIQEKDFVSTVIRLLDSPSTPIRAKAFLVLLYILIHNRD), 796 to 834 (NEYLARCLDLLIQHMVQEPPRILGDILNALANVSGRKHP), 926 to 964 (STVMDYILPPLVSLVQSQNVEWRLFSLRLLSETTTLLVS), 1025 to 1063 (LVEESKLVPLIFEVILEHQESILGNTMQSVIALLNNLVA), 1105 to 1143 (STLLASLLDILLGMLTYTSRIVRQALQVQKSGSRGDTQA), and 1151 to 1189 (SKPLTDLISLLIPLLPSEDPEISEVSSKCLSILVQLYGG).

The protein belongs to the protein kinase superfamily. Ser/Thr protein kinase family. APG1/unc-51/ULK1 subfamily. As to expression, expressed in embryonic and adult brain. In the brain, widely expressed, with highest levels in layers II/III and V of the cortex, piriform cortex, CA1-3 of hippocampus, dentate gyrus, ependymal cells lining the ventricles and choroid plexus, and in the thalamic reticular nucleus (at protein level).

It catalyses the reaction L-seryl-[protein] + ATP = O-phospho-L-seryl-[protein] + ADP + H(+). The enzyme catalyses L-threonyl-[protein] + ATP = O-phospho-L-threonyl-[protein] + ADP + H(+). Its function is as follows. May be involved in the remodeling of cytoskeletal components, such as alpha-tubulin, and in this way regulates neurite branching and elongation, as well as cell motility. The polypeptide is Serine/threonine-protein kinase ULK4 (Ulk4) (Mus musculus (Mouse)).